The chain runs to 197 residues: MSASRFIKCVTVGDGAVGKTCMLISYTSNTFPTDYVPTVFDNFSANVVVDGSTVNLGLWDTAGQEDYNRLRPLSYRGADVFLLAFSLISKASYENVSKKWIPELRHYAPGVPIILVGTKLDLRDDKQFFVDHPGAVPISTAQGEELRKLIGAAAYIECSSKTQQNIKAVFDAAIKVVLQPPKQKKKKKKAQKGCAIL.

13-20 (GDGAVGKT) is a binding site for GTP. Positions 35–43 (YVPTVFDNF) match the Effector region motif. Residues 60-64 (DTAGQ) and 118-121 (TKLD) contribute to the GTP site. Position 194 is a cysteine methyl ester (Cys194). A lipid anchor (S-geranylgeranyl cysteine) is attached at Cys194. Positions 195 to 197 (AIL) are cleaved as a propeptide — removed in mature form.

Belongs to the small GTPase superfamily. Rho family.

The protein resides in the cytoplasm. Its subcellular location is the membrane. Its function is as follows. Inactive GDP-bound Rho GTPases reside in the cytosol, are found in a complex with Rho GDP-dissociation inhibitors (Rho GDIs), and are released from the GDI protein in order to translocate to membranes upon activation. The sequence is that of Rac-like GTP-binding protein 5 (RAC5) from Oryza sativa subsp. japonica (Rice).